A 472-amino-acid chain; its full sequence is Cysteine--tRNA ligase (472 aa).

C29 serves as a coordination point for Zn(2+). The 'HIGH' region signature appears at I31–H41. The Zn(2+) site is built by C214, H239, and E243. Residues K271 to S275 carry the 'KMSKS' region motif. Residue K274 participates in ATP binding.

Belongs to the class-I aminoacyl-tRNA synthetase family. Monomer. Zn(2+) serves as cofactor.

It localises to the cytoplasm. The catalysed reaction is tRNA(Cys) + L-cysteine + ATP = L-cysteinyl-tRNA(Cys) + AMP + diphosphate. In Picosynechococcus sp. (strain ATCC 27264 / PCC 7002 / PR-6) (Agmenellum quadruplicatum), this protein is Cysteine--tRNA ligase.